The primary structure comprises 563 residues: Envelope glycoprotein (563 aa).

The signal sequence occupies residues 1–18; it reads MGFTTKIIFLYNLVLVYA. The Extracellular segment spans residues 19-503; the sequence is GFDDPRKAIE…SNPLWTGLQG (485 aa). Residues N113, N219, and N229 are each glycosylated (N-linked (GlcNAc...) asparagine; by host). Positions 236–239 match the CXXC motif; that stretch reads CWLC. 3 disulfide bridges follow: C236–C239, C236–C465, and C457–C464. N264, N282, N292, N306, N312, N321, and N339 each carry an N-linked (GlcNAc...) asparagine; by host glycan. Residues 380 to 400 are fusion peptide; sequence FIPLLAGLGITAAFTTGATGL. Coiled-coil stretches lie at residues 401–451 and 461–497; these read GVSV…LLTA and QEKC…SNPL. Residues 440 to 456 are immunosuppression; that stretch reads LQNRRGLDLLTAEQGGI. Positions 457-465 match the CX6CC motif; the sequence is CLALQEKCC. An N-linked (GlcNAc...) asparagine; by host glycan is attached at N469. A helical transmembrane segment spans residues 504–524; the sequence is LLPYLLPFLGPLLTLLLLLTI. Over 525–563 the chain is Cytoplasmic; the sequence is GPCIFNRLTAFINDKLNIIHAMVLTQQYQVLRTDEEAQD. A lipid anchor (S-palmitoyl cysteine; by host) is attached at C527. The YXXL motif; contains endocytosis signal motif lies at 552–555; it reads YQVL.

The mature envelope protein (Env) consists of a trimer of SU-TM heterodimers attached by a labile interchain disulfide bond. In terms of processing, specific enzymatic cleavages in vivo yield mature proteins. Envelope glycoproteins are synthesized as an inactive precursor that is N-glycosylated and processed likely by host cell furin or by a furin-like protease in the Golgi to yield the mature SU and TM proteins. The cleavage site between SU and TM requires the minimal sequence [KR]-X-[KR]-R. The R-peptide is released from the C-terminus of the cytoplasmic tail of the TM protein upon particle formation as a result of proteolytic cleavage by the viral protease. Cleavage of this peptide is required for TM to become fusogenic. The CXXC motif is highly conserved across a broad range of retroviral envelope proteins. It is thought to participate in the formation of a labile disulfide bond possibly with the CX6CC motif present in the transmembrane protein. Isomerization of the intersubunit disulfide bond to an SU intrachain disulfide bond is thought to occur upon receptor recognition in order to allow membrane fusion. Post-translationally, the transmembrane protein is palmitoylated.

The protein localises to the virion membrane. The protein resides in the host cell membrane. The surface protein (SU) attaches the virus to the host cell by binding to its receptor. This interaction triggers the refolding of the transmembrane protein (TM) and is thought to activate its fusogenic potential by unmasking its fusion peptide. Fusion occurs at the host cell plasma membrane. Its function is as follows. The transmembrane protein (TM) acts as a class I viral fusion protein. Under the current model, the protein has at least 3 conformational states: pre-fusion native state, pre-hairpin intermediate state, and post-fusion hairpin state. During viral and target cell membrane fusion, the coiled coil regions (heptad repeats) assume a trimer-of-hairpins structure, positioning the fusion peptide in close proximity to the C-terminal region of the ectodomain. The formation of this structure appears to drive apposition and subsequent fusion of viral and target cell membranes. Membranes fusion leads to delivery of the nucleocapsid into the cytoplasm. This Baboon endogenous virus (strain M7) protein is Envelope glycoprotein (env).